The sequence spans 343 residues: Anthranilate phosphoribosyltransferase (343 aa).

Residues glycine 84, 87 to 88 (GD), threonine 92, 94 to 97 (NIST), 112 to 120 (KHGNRGVSS), and serine 124 contribute to the 5-phospho-alpha-D-ribose 1-diphosphate site. Position 84 (glycine 84) interacts with anthranilate. Serine 96 is a binding site for Mg(2+). Asparagine 115 contributes to the anthranilate binding site. Arginine 170 provides a ligand contact to anthranilate. Residues aspartate 229 and glutamate 230 each contribute to the Mg(2+) site.

It belongs to the anthranilate phosphoribosyltransferase family. In terms of assembly, homodimer. It depends on Mg(2+) as a cofactor.

The catalysed reaction is N-(5-phospho-beta-D-ribosyl)anthranilate + diphosphate = 5-phospho-alpha-D-ribose 1-diphosphate + anthranilate. It participates in amino-acid biosynthesis; L-tryptophan biosynthesis; L-tryptophan from chorismate: step 2/5. Functionally, catalyzes the transfer of the phosphoribosyl group of 5-phosphorylribose-1-pyrophosphate (PRPP) to anthranilate to yield N-(5'-phosphoribosyl)-anthranilate (PRA). The protein is Anthranilate phosphoribosyltransferase of Burkholderia vietnamiensis (strain G4 / LMG 22486) (Burkholderia cepacia (strain R1808)).